The primary structure comprises 411 residues: Peptidase T (411 aa).

Residue His-79 participates in Zn(2+) binding. Residue Asp-81 is part of the active site. Asp-142 contacts Zn(2+). Glu-176 serves as the catalytic Proton acceptor. Zn(2+) contacts are provided by Glu-177, Asp-199, and His-381.

This sequence belongs to the peptidase M20B family. It depends on Zn(2+) as a cofactor.

It is found in the cytoplasm. The enzyme catalyses Release of the N-terminal residue from a tripeptide.. Functionally, cleaves the N-terminal amino acid of tripeptides. In Geobacillus kaustophilus (strain HTA426), this protein is Peptidase T.